A 1215-amino-acid polypeptide reads, in one-letter code: Chromosome segregation protein sudA (1215 aa).

32–39 serves as a coordination point for ATP; that stretch reads GRNGSGKS. The stretch at 177 to 522 forms a coiled coil; it reads KIMHETNSKR…LSQMMDHNTS (346 aa). The tract at residues 313-332 is disordered; it reads SDNQAAAQESKARHDESLKA. One can recognise an SMC hinge domain in the interval 538 to 650; sequence EGVYGTLAEL…PNLQVASQYA (113 aa). The interval 654–676 is disordered; that stretch reads GVNATTPEGDRSDKRGALTGGFH. Residues 684 to 1091 are a coiled coil; sequence DAVKNLAKWR…EEAKHSVENY (408 aa).

It belongs to the SMC family. SMC3 subfamily.

It is found in the nucleus. Functionally, involved in chromosome segregation in mitosis. The polypeptide is Chromosome segregation protein sudA (sudA) (Emericella nidulans (strain FGSC A4 / ATCC 38163 / CBS 112.46 / NRRL 194 / M139) (Aspergillus nidulans)).